The primary structure comprises 255 residues: Small ribosomal subunit protein uS2 (255 aa).

It belongs to the universal ribosomal protein uS2 family.

The sequence is that of Small ribosomal subunit protein uS2 from Streptococcus thermophilus (strain ATCC BAA-491 / LMD-9).